The following is a 445-amino-acid chain: tRNA-2-methylthio-N(6)-dimethylallyladenosine synthase (445 aa).

The region spanning 3–120 (RKLFIQTHGC…LPGLITQAAS (118 aa)) is the MTTase N-terminal domain. [4Fe-4S] cluster is bound by residues cysteine 12, cysteine 49, cysteine 83, cysteine 157, cysteine 161, and cysteine 164. A Radical SAM core domain is found at 143–375 (SVDGPSAFVS…QQRINQNVQD (233 aa)). The 65-residue stretch at 378-442 (RKMVGSTQRI…SNSLLGTDPR (65 aa)) folds into the TRAM domain.

It belongs to the methylthiotransferase family. MiaB subfamily. As to quaternary structure, monomer. [4Fe-4S] cluster is required as a cofactor.

The protein resides in the cytoplasm. It carries out the reaction N(6)-dimethylallyladenosine(37) in tRNA + (sulfur carrier)-SH + AH2 + 2 S-adenosyl-L-methionine = 2-methylsulfanyl-N(6)-dimethylallyladenosine(37) in tRNA + (sulfur carrier)-H + 5'-deoxyadenosine + L-methionine + A + S-adenosyl-L-homocysteine + 2 H(+). Catalyzes the methylthiolation of N6-(dimethylallyl)adenosine (i(6)A), leading to the formation of 2-methylthio-N6-(dimethylallyl)adenosine (ms(2)i(6)A) at position 37 in tRNAs that read codons beginning with uridine. In Alcanivorax borkumensis (strain ATCC 700651 / DSM 11573 / NCIMB 13689 / SK2), this protein is tRNA-2-methylthio-N(6)-dimethylallyladenosine synthase.